The following is a 170-amino-acid chain: E1B protein, small T-antigen (170 aa).

The disordered stretch occupies residues 137–170; the sequence is PAQPPHGLDPVREEEEEEEEEENLRAGLDPQTEL. Residues 148 to 158 show a composition bias toward acidic residues; the sequence is REEEEEEEEEE.

The protein belongs to the adenoviridae E1B 19 kDa protein family.

It is found in the host cell membrane. It localises to the host nucleus envelope. The protein localises to the host nucleus lamina. In terms of biological role, putative adenovirus Bcl-2 homolog that inhibits apoptosis induced by TNF or FAS pathways, as well as p53-mediated apoptosis. Without E1B 19K function, virus production is compromised because of premature death of host cell. Interacts with Bax protein in cell lysates. The protein is E1B protein, small T-antigen of Homo sapiens (Human).